A 754-amino-acid chain; its full sequence is Cytosolic neutral trehalase (754 aa).

Over residues 1 to 10 (MDGKVNNNPP) the composition is skewed to polar residues. Disordered regions lie at residues 1 to 47 (MDGK…LSKN) and 54 to 73 (TFSV…YTSP). Residues Asp117, Asp119, Asn121, Gln123, and Asp128 each contribute to the Ca(2+) site. Residues Arg305, 312–313 (WD), Asn349, 358–360 (RSQ), Glu427, Arg476, and Gly479 each bind substrate. Residues Asp481 and Glu676 each act as proton donor/acceptor in the active site.

The protein belongs to the glycosyl hydrolase 37 family. Requires Ca(2+) as cofactor.

It is found in the cytoplasm. The enzyme catalyses alpha,alpha-trehalose + H2O = alpha-D-glucose + beta-D-glucose. It participates in carbohydrate degradation. Functionally, hydrolyzes intracellular trehalose to glucose. The disaccharide trehalose serves as a storage molecule for energy and carbohydrates that is mobilized during nutrient stress. This Kluyveromyces lactis (strain ATCC 8585 / CBS 2359 / DSM 70799 / NBRC 1267 / NRRL Y-1140 / WM37) (Yeast) protein is Cytosolic neutral trehalase.